A 552-amino-acid chain; its full sequence is Putative transport protein Spro_0050 (552 aa).

6 consecutive transmembrane segments (helical) span residues 4 to 24 (IALT…MGNW), 26 to 46 (IYGV…VGHF), 65 to 85 (FGLI…FFSS), 96 to 116 (FAIL…KLFA), 117 to 137 (VPLP…PALG), and 158 to 178 (MGYA…MWLI). RCK C-terminal domains follow at residues 192–276 (AFAS…VIGE) and 279–361 (DVSL…IVGN). Transmembrane regions (helical) follow at residues 371–391 (MLPV…PLFI), 393–413 (GFPA…ALIL), 439–459 (IVLF…DTLI), 464–484 (LAWI…VGVL), 493–513 (YLTL…LAFA), and 530–550 (VYPL…VLFW).

The protein belongs to the AAE transporter (TC 2.A.81) family. YidE subfamily.

The protein localises to the cell membrane. This chain is Putative transport protein Spro_0050, found in Serratia proteamaculans (strain 568).